We begin with the raw amino-acid sequence, 87 residues long: Cell division topological specificity factor (87 aa).

It belongs to the MinE family.

Prevents the cell division inhibition by proteins MinC and MinD at internal division sites while permitting inhibition at polar sites. This ensures cell division at the proper site by restricting the formation of a division septum at the midpoint of the long axis of the cell. In Aliivibrio fischeri (strain ATCC 700601 / ES114) (Vibrio fischeri), this protein is Cell division topological specificity factor.